A 422-amino-acid polypeptide reads, in one-letter code: MSASKIPLFKMKGLLLFLSLVKMSLAVPAFPQQPGAQGMAPPGMASLSLETMRQLGSLQGLNALSQYSRLGFGKALNSLWLHGLLPPHNSFPWIGPREHETQQYEYSLPVHPPPLPSQPSLQPHQPGLKPFLQPTAATGVQVTPQKPGPHPPMHPGQLPLQEGELIAPDEPQVAPSENPPTPEVPIMDFADPQFPTVFQIAHSLSRGPMAHNKVPTFYPGMFYMSYGANQLNAPARIGFMSSEEMPGERGSPMAYGTLFPGYGGFRQTLRGLNQNSPKGGDFTVEVDSPVSVTKGPEKGEGPEGSPLQEASPDKGENPALLSQMAPGAHAGLLAFPNDHIPNMARGPAGQRLLGVTPAAADPLITPELAEVYETYGADVTTPLGDGEATMDITMSPDTQQPPMPGNKVHQPQVHNAWRFQEP.

Residues 1–26 (MSASKIPLFKMKGLLLFLSLVKMSLA) form the signal peptide. P42 carries the hydroxyproline modification. Phosphoserine is present on S48. An O-linked (GalNAc...) serine glycan is attached at S117. Positions 271-321 (GLNQNSPKGGDFTVEVDSPVSVTKGPEKGEGPEGSPLQEASPDKGENPALL) are disordered.

This sequence belongs to the ameloblastin family. As to expression, ameloblast-specific.

It localises to the secreted. It is found in the extracellular space. The protein localises to the extracellular matrix. Its function is as follows. Involved in the mineralization and structural organization of enamel. This Rattus norvegicus (Rat) protein is Ameloblastin (Ambn).